Reading from the N-terminus, the 742-residue chain is Clamp-binding protein CrfC (742 aa).

The segment at 41–45 is clamp-binding consensus; that stretch reads QLALP. Positions 66–402 constitute a Dynamin-type G domain; it reads SRLEMVLAIV…LWEDSLFAQP (337 aa). Positions 76–83 are G1 motif; it reads GTMKAGKS. A G2 motif region spans residues 102–104; the sequence is MTA. Residues 236-239 are G3 motif; that stretch reads DTPG. Residues 297–300 form a G4 motif region; the sequence is NKFD. The interval 331 to 334 is G5 motif; the sequence is FPVS. Residues 440-472 adopt a coiled-coil conformation; it reads RAHGLNVACEQLRQNIHQVEESLQLLQLNQAQV.

The protein belongs to the TRAFAC class dynamin-like GTPase superfamily. Dynamin/Fzo/YdjA family. In terms of assembly, forms homooligomers. Binds to the beta sliding clamp processivity factor (DnaN) in the presence and absence of DNA, may bind to the clamp itself as homodimers or trimers. Homooligomers may be able to bind more than 1 clamp complex.

Its subcellular location is the cytoplasm. Its function is as follows. Important for the colocalization of sister nascent DNA strands after replication fork passage during DNA replication, and for positioning and subsequent partitioning of sister chromosomes. Does not have GTPase activity on its own. This is Clamp-binding protein CrfC (crfC) from Escherichia coli.